A 101-amino-acid chain; its full sequence is Protein S100-A4 (101 aa).

Ala2 bears the N-acetylalanine mark. Position 7 is an N6-acetyllysine (Lys7). EF-hand domains are found at residues 12-47 and 50-85; these read MVST…SFLG and TDEA…IAMM. Ca(2+) contacts are provided by Lys28 and Glu33. Lys35 carries the N6-acetyllysine modification. Asp63, Asn65, Asp67, Glu69, and Glu74 together coordinate Ca(2+).

This sequence belongs to the S-100 family. In terms of assembly, homodimer. Interacts with PPFIBP1 in a calcium-dependent mode. Interacts with PGLYRP1; this complex acts as a chemoattractant that promotes lymphocyte movement. Interacts with MYH9; this interaction increases cell motility. Interacts with Annexin 2/ANXA2. Interacts with TP53; this interaction promotes TP53 degradation. Interacts with CCR5. Interacts with FCGR3A; this interaction inhibits PKC-dependent phosphorylation of FCGR3A. Ubiquitously expressed.

Its subcellular location is the secreted. It localises to the nucleus. The protein resides in the cytoplasm. Functionally, calcium-binding protein that plays a role in various cellular processes including motility, angiogenesis, cell differentiation, apoptosis, and autophagy. Increases cell motility and invasiveness by interacting with non-muscle myosin heavy chain (NMMHC) IIA/MYH9. Mechanistically, promotes filament depolymerization and increases the amount of soluble myosin-IIA, resulting in the formation of stable protrusions facilitating chemotaxis. Also modulates the pro-apoptotic function of TP53 by binding to its C-terminal transactivation domain within the nucleus and reducing its protein levels. Within the extracellular space, stimulates cytokine production including granulocyte colony-stimulating factor and CCL24 from T-lymphocytes. In addition, stimulates T-lymphocyte chemotaxis by acting as a chemoattractant complex with PGLYRP1 that promotes lymphocyte migration via CCR5 and CXCR3 receptors. This chain is Protein S100-A4 (S100A4), found in Homo sapiens (Human).